The sequence spans 388 residues: CUE domain-containing protein 1 (388 aa).

Positions M1–S10 are enriched in low complexity. Positions M1 to Q45 are disordered. Over residues G11–D29 the composition is skewed to gly residues. Residues E50–L93 form the CUE domain. 4 disordered regions span residues P152–P178, D196–Q225, S270–E302, and D369–Q388. Residues V290 to V300 show a composition bias toward polar residues.

The polypeptide is CUE domain-containing protein 1 (Cuedc1) (Mus musculus (Mouse)).